The primary structure comprises 185 residues: NEDD8-conjugating enzyme UBE2F (185 aa).

Residue M1 is modified to N-acetylmethionine. An interaction with UBA3 region spans residues 1–29; that stretch reads MLTLASKLKRDDGLKGSRTAATASDSTRR. The 154-residue stretch at 32–185 folds into the UBC core domain; sequence VRDKLLVKEV…VDDYIKRYAR (154 aa). The Glycyl thioester intermediate role is filled by C116.

Belongs to the ubiquitin-conjugating enzyme family. UBE2F subfamily. As to quaternary structure, interacts with UBA3 and RBX2. Interacts (N-terminally acetylated form) with (via DCUN1 domain) DCUN1D1, DCUN1D2, DCUN1D3, DCUN1D4 and DCUN1D5. The acetylation of Met-1 increases affinity for DCUN1D3 by about 2 orders of magnitude and is crucial for NEDD8 transfer to cullins. In terms of tissue distribution, widely expressed (at protein level).

It catalyses the reaction [E1 NEDD8-activating enzyme]-S-[NEDD8 protein]-yl-L-cysteine + [E2 NEDD8-conjugating enzyme]-L-cysteine = [E1 NEDD8-activating enzyme]-L-cysteine + [E2 NEDD8-conjugating enzyme]-S-[NEDD8-protein]-yl-L-cysteine.. It functions in the pathway protein modification; protein neddylation. Functionally, accepts the ubiquitin-like protein NEDD8 from the UBA3-NAE1 E1 complex and catalyzes its covalent attachment to other proteins. Together with the E3 ubiquitin ligase RNF7/RBX2, specifically neddylates cullin-5 (CUL5). Does not neddylate CUL1, CUL2, CUL3, CUL4A or CUL4B. Mediates neddylation of the CUL9-RBX1 complex. Its function is as follows. (Microbial infection) Following infection by HIV-1 virus, participates to HIV-1 Vif protein-mediated ubiquitination and degradation of APOBEC3G by mediating neddylation of cullin-5 (CUL5). This Homo sapiens (Human) protein is NEDD8-conjugating enzyme UBE2F (UBE2F).